The following is a 185-amino-acid chain: Ribosome-recycling factor (185 aa).

The protein belongs to the RRF family.

Its subcellular location is the cytoplasm. Its function is as follows. Responsible for the release of ribosomes from messenger RNA at the termination of protein biosynthesis. May increase the efficiency of translation by recycling ribosomes from one round of translation to another. The chain is Ribosome-recycling factor from Bacillus anthracis (strain A0248).